The chain runs to 447 residues: Protein king tubby (447 aa).

Low complexity-rich tracts occupy residues glycine 71–serine 92 and asparagine 157–serine 169. Positions glycine 71–valine 196 are disordered.

The protein belongs to the TUB family.

It is found in the cytoplasm. The protein resides in the nucleus. In Anopheles gambiae (African malaria mosquito), this protein is Protein king tubby.